Reading from the N-terminus, the 43-residue chain is uncharacterized protein (43 aa).

Residues 1 to 17 form the signal peptide; that stretch reads MYRRLLLNLFCMVFLQA.

This is an uncharacterized protein from Helicobacter pylori (strain J99 / ATCC 700824) (Campylobacter pylori J99).